The chain runs to 299 residues: N-acetylmuramic acid 6-phosphate etherase (299 aa).

An SIS domain is found at 57 to 220 (ISAAFHKKGR…TTGAMIRTGK (164 aa)). Glutamate 85 functions as the Proton donor in the catalytic mechanism. Glutamate 116 is a catalytic residue.

Belongs to the GCKR-like family. MurNAc-6-P etherase subfamily. As to quaternary structure, homodimer.

It catalyses the reaction N-acetyl-D-muramate 6-phosphate + H2O = N-acetyl-D-glucosamine 6-phosphate + (R)-lactate. Its pathway is amino-sugar metabolism; 1,6-anhydro-N-acetylmuramate degradation. It participates in amino-sugar metabolism; N-acetylmuramate degradation. It functions in the pathway cell wall biogenesis; peptidoglycan recycling. Its function is as follows. Specifically catalyzes the cleavage of the D-lactyl ether substituent of MurNAc 6-phosphate, producing GlcNAc 6-phosphate and D-lactate. Together with AnmK, is also required for the utilization of anhydro-N-acetylmuramic acid (anhMurNAc) either imported from the medium or derived from its own cell wall murein, and thus plays a role in cell wall recycling. This is N-acetylmuramic acid 6-phosphate etherase from Psychromonas ingrahamii (strain DSM 17664 / CCUG 51855 / 37).